A 98-amino-acid chain; its full sequence is MREETVVYEQEESVSHGGGKHRILAELARVEQEVAFLEKELKEVENTDIVSTVCEELLSVIEKGPDPLLPLTNGPLNLGWDRWFEGPNGGEGCRCLIL.

The region spanning 19–98 (GKHRILAELA…GGEGCRCLIL (80 aa)) is the G protein gamma domain. Residues 20 to 50 (KHRILAELARVEQEVAFLEKELKEVENTDIV) adopt a coiled-coil conformation. The segment at 88-94 (NGGEGCR) is regulates lipidation and cell membrane subcellular localization. Cys-93 carries the S-palmitoyl cysteine lipid modification. Cys-95 carries the post-translational modification Cysteine methyl ester. Residue Cys-95 is the site of S-farnesyl cysteine attachment. Residues 96–98 (LIL) constitute a propeptide, removed in mature form.

G proteins are composed of 3 units, alpha, beta and gamma. Interacts with the beta subunit GB1. The dimer GB1-GG1 interacts with NDL1, NDL2 and NDL3. Binds to NUDT7. In terms of tissue distribution, mostly expressed in seedlings (especially at the hypocotyl/root junction), young cauline leaves, open flowers, and floral stems, and, to a lower extent, in roots (restricted to the stele), rosette leaves (restricted to veins), siliques, and unopened floral buds. Also present in hydathods.

The protein resides in the cell membrane. The protein localises to the golgi apparatus membrane. It localises to the golgi apparatus. It is found in the trans-Golgi network membrane. Its subcellular location is the cytoplasm. Functionally, guanine nucleotide-binding proteins (G proteins) are involved as a modulator or transducer in various transmembrane signaling systems. The beta and gamma chains are required for the GTPase activity, for replacement of GDP by GTP, and for G protein-effector interaction. Involved in the abscisic acid (ABA) and ethylene signaling pathways. Regulates acropetal transport of auxin (IAA) in roots and hypocotyls, and thus modulates root architecture (e.g. lateral root formation). The heterotrimeric G-protein controls defense responses to necrotrophic and vascular fungi probably by modulating cell wall-related genes expression; involved in resistance to fungal pathogens such as Alternaria brassicicola, Plectosphaerella cucumerina and Fusarium oxysporum. The polypeptide is Guanine nucleotide-binding protein subunit gamma 1 (GG1) (Arabidopsis thaliana (Mouse-ear cress)).